The following is a 378-amino-acid chain: MPYSNLHPAIPRPRGHRSKYVALIFLVASLMILWVAKDPPNHTLKYLALHLASHELGLLLKNLCCLAEELCHVQSRYQGSYWKAVRACLGCPIHCMAMILLSSYFYFLQNTADIYLSWMFGLLVLYKSLSMLLGLQSLTPAEVSAVCEEKKLNVAHGLAWSYYIGYLRLILPGLQARIRMFNQLHNNMLSGAGSRRLYILFPLDCGVPDNLSVVDPNIRFRDMLPQQNIDRAGIKNRVYSNSVYEILENGQPAGVCILEYATPLQTLFAMSQDAKAGFSREDRLEQAKLFCRTLEEILEDVPESRNNCRLIVYQEPTDGNSFSLSQEVLRHIRQEEKEEVTMNAPMTSVAPPPSVLSQEPRLLISGMDQPLPLRTDLI.

Topologically, residues 1-17 (MPYSNLHPAIPRPRGHR) are cytoplasmic. Residues 1-189 (MPYSNLHPAI…MFNQLHNNML (189 aa)) form a mediates interaction with ZDHHC1 and ZDHHC11 region. Residues 18 to 34 (SKYVALIFLVASLMILW) traverse the membrane as a helical segment. Residue K19 forms a Glycyl lysine isopeptide (Lys-Gly) (interchain with G-Cter in ubiquitin) linkage. Topologically, residues 35 to 44 (VAKDPPNHTL) are lumenal. Residues 45–69 (KYLALHLASHELGLLLKNLCCLAEE) form a helical membrane-spanning segment. The Cytoplasmic portion of the chain corresponds to 70–91 (LCHVQSRYQGSYWKAVRACLGC). 2 S-palmitoyl cysteine lipidation sites follow: C88 and C91. A helical membrane pass occupies residues 92–106 (PIHCMAMILLSSYFY). Over 107-115 (FLQNTADIY) the chain is Lumenal. A helical membrane pass occupies residues 116 to 133 (LSWMFGLLVLYKSLSMLL). Over 134–378 (GLQSLTPAEV…QPLPLRTDLI (245 aa)) the chain is Cytoplasmic. K150 participates in a covalent cross-link: Glycyl lysine isopeptide (Lys-Gly) (interchain with G-Cter in ubiquitin). A cyclic dinucleotide-binding domain (CBD) region spans residues 152–339 (LNVAHGLAWS…RHIRQEEKEE (188 aa)). G165 provides a ligand contact to 3',3'-c-di-GMP. 2',3'-cUAMP is bound at residue Y166. Y166 lines the 3',3'-cGAMP pocket. A Glycyl lysine isopeptide (Lys-Gly) (interchain with G-Cter in ubiquitin) cross-link involves residue K235. R237 lines the 2',3'-cUAMP pocket. Position 237 (R237) interacts with 3',3'-cGAMP. R237 is a binding site for 2',3'-cGAMP. 3',3'-c-di-GMP contacts are provided by residues 237–240 (RVYS) and T262. S240 is modified (phosphoserine). Residue T262 coordinates 2',3'-cUAMP. T262 serves as a coordination point for 2',3'-cGAMP. Residue K337 forms a Glycyl lysine isopeptide (Lys-Gly) (interchain with G-Cter in SUMO) linkage. The interval 339-378 (EVTMNAPMTSVAPPPSVLSQEPRLLISGMDQPLPLRTDLI) is C-terminal tail (CTT). S354 is subject to Phosphoserine; by MAP3K7. Phosphoserine; by TBK1 is present on residues S357 and S365. The short motif at 362–365 (LLIS) is the pLxIS motif element.

Belongs to the STING family. As to quaternary structure, homodimer; forms a homodimer in absence of cyclic nucleotide (c-di-GMP or cGAMP); 'Lys-63'-linked ubiquitination at Lys-150 is required for homodimerization. Homotetramer; in presence of cyclic nucleotide (c-di-GMP or cGAMP), forms tetramers and higher-order oligomers through side-by-side packing. Interacts (when phosphorylated) with IRF3; following activation and phosphorylation on the pLxIS motif by TBK1, recruits IRF3. Interacts with RIGI, MAVS and SSR2. Interacts with RNF5 and TRIM56. Interacts with TBK1; when homodimer, leading to subsequent production of IFN-beta. Interacts with IFIT1 and IFIT2. Interacts with TRIM29; this interaction induces STING1 ubiquitination and subsequent degradation. Associates with the MHC-II complex. Interacts with STEEP1; interaction takes place upon cGAMP-activation and STING1 phosphorylation by MAP3K7/TAK1 and promotes STING1 translocation to COPII vesicles. Interacts with SEC24A, SEC24B and SEC24C; promoting translocation to COPII vesicles. Interacts (when ubiquitinated) with SQSTM1; leading to relocalization to autophagosomes. Interacts with SURF4. Interacts with HNRNPA2B1. Interacts with ZDHHC1; ZDHHC1 constitutively interacts with STING1 and in presence of DNA viruses activates it by promoting its cGAMP-induced oligomerization and the recruitment of downstream signaling components. Interacts with ZDHHC11; in presence of DNA viruses promotes the recruitment of IRF3 to STING1. Interacts with TOMM70. Interacts with IFI204. Interacts with TAB1; promoting recruitment of TAB1 to the endoplasmic reticulum membrane and subsequent activation of MAP3K7/TAK1. Interacts (via transmembrane domain) with TMEM203. Interacts with DDX41. Phosphorylation by TBK1 leads to activation and production of IFN-beta. Following cyclic nucleotide (c-di-GMP or cGAMP)-binding, activation and translocation from the endoplasmic reticulum, STING1 is phosphorylated by TBK1 at Ser-365 in the pLxIS motif. The phosphorylated pLxIS motif constitutes an IRF3-binding motif, leading to recruitment of the transcription factor IRF3 to induce type-I interferons and other cytokines. The phosphorylated pLxIS motif facilitates SENP2 recruitment during late phase of viral infection. Phosphorylated on tyrosine residues upon MHC-II aggregation. Dephosphorylation by PPP6C leads to inactivation and decreased production of IFN-beta. Phosphorylation at Ser-357 is also required to activate IRF3. Phosphorylation at Ser-354 by MAP3K7/TAK1 facilitates its interaction with STEEP1, promoting STING1 translocation to COPII vesicles. In terms of processing, ubiquitinated. Ubiquitinated via 'Lys-63'-linked ubiquitin chains in response to double-stranded DNA treatment, leading to relocalization to autophagosomes and subsequent degradation; this process is dependent on SQSTM1. 'Lys-63'-linked ubiquitination mediated by TRIM56 at Lys-150 promotes homodimerization and recruitment of the antiviral kinase TBK1 and subsequent production of IFN-beta. 'Lys-48'-linked polyubiquitination at Lys-150 occurring after viral infection is mediated by RNF5 and leads to proteasomal degradation. 'Lys-11'-linked polyubiquitination at Lys-150 by RNF26 leads to stabilize STING1: it protects STING1 from RNF5-mediated 'Lys-48'-linked polyubiquitination. 'Lys-33'-linked and 'Lys-48'-linked deubiquitinated by USP20; leading to its stabilization and promotion of innate antiviral response. 'Lys-48'-linked deubiquitinated by USP44; leading to its stabilization and promotion of innate antiviral response. Deubiquitinated by USP13; leading to inhibition of innate antiviral response. 'Lys-63'-linked deubiquitinated by USP49; leading to inhibition of the subsequent recruitment of TBK1 to the signaling complex. 'Lys-63'-linked ubiquitination mediated by RNF39 promotes the activation of the cGAS-STING pathway. MARCHF5-mediated ubiquitination prevents the oxidation-induced polymer formation. Post-translationally, sumoylated at Lys-337 by TRIM38 during the early phase of viral infection, promoting its stability by preventing its relocalization to autophagosomes and subsequent degradation. Desumoylated by SENP2 during the late phase of viral infection. Palmitoylation takes place in the Golgi apparatus and creates a platform for the recruitment of TBK1. In terms of tissue distribution, present in spleen and thymus tissue. Also present in dendritic cells (at protein level).

Its subcellular location is the endoplasmic reticulum membrane. It localises to the cytoplasm. The protein localises to the perinuclear region. The protein resides in the endoplasmic reticulum-Golgi intermediate compartment membrane. It is found in the golgi apparatus membrane. Its subcellular location is the cytoplasmic vesicle. It localises to the autophagosome membrane. The protein localises to the mitochondrion outer membrane. The protein resides in the cell membrane. It is found in the lysosome membrane. The enzyme catalyses H(+)(in) = H(+)(out). Activated by anticancer drug 5,6-dimethylxanthenone 4-acetic acid (DMXAA). Specifically inhibited by nitrofuran derivatives C-178 and C-176, which covalently bind Cys-91 and prevent palmitoylation and subsequent activation od STING1. Functionally, facilitator of innate immune signaling that acts as a sensor of cytosolic DNA from bacteria and viruses and promotes the production of type I interferon (IFN-alpha and IFN-beta). Innate immune response is triggered in response to non-CpG double-stranded DNA from viruses and bacteria delivered to the cytoplasm. Acts by binding cyclic dinucleotides: recognizes and binds cyclic di-GMP (c-di-GMP), a second messenger produced by bacteria, cyclic UMP-AMP (2',3'-cUAMP), and cyclic GMP-AMP (cGAMP), a messenger produced by CGAS in response to DNA virus in the cytosol. Upon binding to c-di-GMP, cUAMP or cGAMP, STING1 oligomerizes, translocates from the endoplasmic reticulum and is phosphorylated by TBK1 on the pLxIS motif, leading to recruitment and subsequent activation of the transcription factor IRF3 to induce expression of type I interferon and exert a potent anti-viral state. Exhibits 2',3' phosphodiester linkage-specific ligand recognition: can bind both 2'-3' linked cGAMP (2'-3'-cGAMP) and 3'-3' linked cGAMP but is preferentially activated by 2'-3' linked cGAMP. The preference for 2'-3'-cGAMP, compared to other linkage isomers is probably due to the ligand itself, whichs adopts an organized free-ligand conformation that resembles the STING1-bound conformation and pays low energy costs in changing into the active conformation. In addition to promote the production of type I interferons, plays a direct role in autophagy. Following cGAMP-binding, STING1 buds from the endoplasmic reticulum into COPII vesicles, which then form the endoplasmic reticulum-Golgi intermediate compartment (ERGIC). The ERGIC serves as the membrane source for WIPI2 recruitment and LC3 lipidation, leading to formation of autophagosomes that target cytosolic DNA or DNA viruses for degradation by the lysosome. Promotes autophagy by acting as a proton channel that directs proton efflux from the Golgi to facilitate MAP1LC3B/LC3B lipidation. The autophagy- and interferon-inducing activities can be uncoupled and autophagy induction is independent of TBK1 phosphorylation. Autophagy is also triggered upon infection by bacteria: following c-di-GMP-binding, which is produced by live Gram-positive bacteria, promotes reticulophagy. May be involved in translocon function, the translocon possibly being able to influence the induction of type I interferons. May be involved in transduction of apoptotic signals via its association with the major histocompatibility complex class II (MHC-II). The sequence is that of Stimulator of interferon genes protein from Mus musculus (Mouse).